Reading from the N-terminus, the 192-residue chain is Ion-translocating oxidoreductase complex subunit B (192 aa).

Residues 1-26 (MNAFWIAVAAVSLLGLAFGAILGYAS) form a hydrophobic region. Residues 32–91 (EDDPVVEKIDEILPQSQCGQCGYPGCRPYAEAISCNGEKINRCAPGGEAVMLKIAELLNV) enclose the 4Fe-4S domain. Positions 49, 52, 57, 74, 117, 120, 123, 127, 147, 150, 153, and 157 each coordinate [4Fe-4S] cluster. 4Fe-4S ferredoxin-type domains are found at residues 108–137 (MVAVIDENNCIGCTKCIQACPVDAIVGATR) and 138–167 (AMHTVMSDLCTGCNLCVDPCPTHCISLQPV).

This sequence belongs to the 4Fe4S bacterial-type ferredoxin family. RnfB subfamily. The complex is composed of six subunits: RsxA, RsxB, RsxC, RsxD, RsxE and RsxG. It depends on [4Fe-4S] cluster as a cofactor.

The protein resides in the cell inner membrane. Functionally, part of a membrane-bound complex that couples electron transfer with translocation of ions across the membrane. Required to maintain the reduced state of SoxR. The chain is Ion-translocating oxidoreductase complex subunit B from Escherichia coli O6:H1 (strain CFT073 / ATCC 700928 / UPEC).